A 256-amino-acid chain; its full sequence is MKLMMYSIKMRSAKGGPHEEGGKHISGAERILREDEIEEELINVYRRAITHEKGKPDFINLKIEAIDEDKILYKKRLNIIQHKVSSKEEGLKLAKELLIKNTVSEEAAKEGISSIQKLKESIHGAMLLDKDSGKRIDDKGIKGVRVTGIASADIKKYKESLKRDGREGLHLEEALILASKIASCKAIVAELCWSDDPSYVIGYVGTKENYHRIPILKDKGNPVGGRVFFVDTSQLNDNYTLEDLIDYLEKQIVLIE.

It belongs to the BioW family. In terms of assembly, homodimer. The cofactor is Mg(2+).

The enzyme catalyses heptanedioate + ATP + CoA = 6-carboxyhexanoyl-CoA + AMP + diphosphate. It participates in metabolic intermediate metabolism; pimeloyl-CoA biosynthesis; pimeloyl-CoA from pimelate: step 1/1. Its function is as follows. Catalyzes the transformation of pimelate into pimeloyl-CoA with concomitant hydrolysis of ATP to AMP. The sequence is that of 6-carboxyhexanoate--CoA ligase from Methanobrevibacter ruminantium (strain ATCC 35063 / DSM 1093 / JCM 13430 / OCM 146 / M1) (Methanobacterium ruminantium).